The sequence spans 297 residues: Elongation factor Ts (297 aa).

Positions 82–85 are involved in Mg(2+) ion dislocation from EF-Tu; the sequence is TDFV. Over residues 223–265 the composition is skewed to low complexity; it reads AQTAAAAETAPPEVSEPEPAAAVTAEEPTPEPVAAAEQPAEPV. The interval 223–297 is disordered; the sequence is AQTAAAAETA…GKSRSNKKKK (75 aa). Over residues 286 to 297 the composition is skewed to basic residues; it reads SGGKSRSNKKKK.

It belongs to the EF-Ts family.

The protein localises to the cytoplasm. Its function is as follows. Associates with the EF-Tu.GDP complex and induces the exchange of GDP to GTP. It remains bound to the aminoacyl-tRNA.EF-Tu.GTP complex up to the GTP hydrolysis stage on the ribosome. This is Elongation factor Ts from Thermosynechococcus vestitus (strain NIES-2133 / IAM M-273 / BP-1).